Reading from the N-terminus, the 117-residue chain is Galanin-like peptide (117 aa).

A signal peptide spans Met1–Ser23. Residues Thr86 to Ser117 constitute a propeptide that is removed on maturation.

Belongs to the galanin family. In terms of tissue distribution, isoform 2 is found in brain, thymus and skin. Isoform 2 is found in the skin, in pericytes covering microvascular arterioles and venules on their abluminal surfaces. In larger vessels, isoform 2 is expressed in layers of smooth muscle cells. Isoform 2 is not detected in endothelial cells.

It localises to the secreted. Its function is as follows. Hypothalamic neuropeptide which binds to the G-protein-coupled galanin receptors (GALR1, GALR2 and GALR3). Involved in a large number of putative physiological functions in CNS homeostatic processes, including the regulation of gonadotropin-releasing hormone secretion. Exhibits antimicrobial activity against Gram-negative bacterias, inducing bacterial membrane blebbing. Exhibits potent and dose-dependent vasoconstrictor and anti-edema activity in the cutaneous microvasculature, a physiologic effects which does not appear to be mediated via GALR1 or GALR2. This chain is Galanin-like peptide (Galp), found in Mus musculus (Mouse).